The following is a 608-amino-acid chain: Mitochondrial import receptor subunit TOM70 (608 aa).

The residue at position 2 (alanine 2) is an N-acetylalanine. Over 2–38 (AASKPVEAAVVAAAVPSSGSGVGGGGTAGPGTGGLPR) the chain is Mitochondrial intermembrane. The helical transmembrane segment at 39–59 (WQLALAVGAPLLLGAGAIYLW) threads the bilayer. Over 60–608 (SRQQRRREAR…KKYGLKPPTL (549 aa)) the chain is Cytoplasmic. The interval 67-107 (EARGRGDASGLKRNSERKTPEGRASPAPGSGHPEGPGAHLD) is disordered. Arginine 71 carries the omega-N-methylarginine modification. Phosphoserine occurs at positions 91, 96, and 110. 2 TPR repeats span residues 114–147 (AQAA…CPTE) and 153–186 (STFY…NPKY). Residue lysine 185 is modified to N6-acetyllysine. A Glycyl lysine isopeptide (Lys-Gly) (interchain with G-Cter in SUMO2) cross-link involves residue lysine 275. TPR repeat units follow at residues 294 to 327 (ENSG…EGKY), 329 to 362 (AEAL…KEAN), 367 to 400 (ANAL…DPQN), 401 to 434 (ADVY…RPES), 440 to 475 (QKCF…FPRC), 476 to 509 (AEGY…EPDN), 511 to 544 (TTYV…DNKC), and 545 to 578 (DFAY…AKSE). A Phosphoserine modification is found at serine 434.

Belongs to the Tom70 family. In terms of assembly, forms part of the preprotein translocase complex of the outer mitochondrial membrane (TOM complex) which consists of at least 7 different proteins (TOMM5, TOMM6, TOMM7, TOMM20, TOMM22, TOMM40 and TOMM70). Interacts with CAPN8. Interacts with TRADD, TRAF6 and STING. Interacts with MAVS; the interaction is enhanced by Sendai virus infection. Interacts with HSPA8 and HSP90AA1; both interactions are required for preprotein mitochondrial import. The interaction with HSP90AA1 is direct and mediates the association of TOMM70 with IRF3 and TBK1. Upon mitochondrial depolarization, interacts with PINK1; the interaction is required for PINK1-TOM-TIM23 supercomplex formation which is critical for PINK1 stabilization at the outer mitochondrial membrane, kinase activation and downstream mitophagy. (Microbial infection) Interacts (via C-terminus) with SARS coronaviru/SARS-CoV and SARS coronavirus-2/SARS-CoV-2 virus protein ORF9b. As to quaternary structure, (Microbial infection) Interacts with parasite T.gondii RH strain MAF1b1; the interaction impairs TOMM70 import activity, enables the parasite to associate with the host mitochondria and facilitates the association of MAF1b1 with MIB complex component SAMM50, promoting the formation of SPOTs (structures positive for outer mitochondrial membrane (OMM)); the interaction is probably indirect.

The protein localises to the mitochondrion outer membrane. Acts as a receptor of the preprotein translocase complex of the outer mitochondrial membrane (TOM complex). Recognizes and mediates the translocation of mitochondrial preproteins from the cytosol into the mitochondria in a chaperone dependent manner. Mediates TBK1 and IRF3 activation induced by MAVS in response to Sendai virus infection and promotes host antiviral responses during virus infection. Upon Sendai virus infection, recruits HSP90AA1:IRF3:BAX in mitochondrion and the complex induces apoptosis. In Homo sapiens (Human), this protein is Mitochondrial import receptor subunit TOM70.